A 382-amino-acid chain; its full sequence is Alkanesulfonate monooxygenase (382 aa).

It belongs to the SsuD family.

The catalysed reaction is an alkanesulfonate + FMNH2 + O2 = an aldehyde + FMN + sulfite + H2O + 2 H(+). In terms of biological role, catalyzes the desulfonation of aliphatic sulfonates. The protein is Alkanesulfonate monooxygenase of Pseudomonas putida (strain GB-1).